The chain runs to 126 residues: Adenosine 5'-monophosphoramidase HINT1 (126 aa).

N-acetylalanine is present on A2. One can recognise an HIT domain in the interval 18–126 (IFGKIIRKEI…GGRQMNWPPG (109 aa)). N6-acetyllysine is present on residues K21 and K30. 43 to 44 (DI) is a binding site for AMP. A phosphoserine mark is found at S45 and S72. Residues N99, 105-107 (GQS), and 112-114 (HLH) each bind AMP. The Histidine triad motif motif lies at 110–114 (HVHLH). H112 serves as the catalytic Tele-AMP-histidine intermediate.

This sequence belongs to the HINT family. In terms of assembly, homodimer. Interacts with CDK7. Interacts with RUVBL1 and RUVBL2 and is associated with the LEF1/TCF1-CTNNB1 complex and with a KAT5 histone acetyltransferase complex. Identified in a complex with MITF and CTNNB1. Interacts with CDC34 and RBX1, and is part of a SCF (SKP2-CUL1-F-box protein) E3 ubiquitin-protein ligase complex. Interacts with SUMO1, SUMO2 and RGS17. Interacts with the Ten-1 ICD form of TENM1. Interacts with CALM1; interaction increases in the presence of calcium ions. As to expression, widely expressed.

The protein resides in the cytoplasm. It is found in the nucleus. It catalyses the reaction adenosine 5'-phosphoramidate + H2O = AMP + NH4(+). In terms of biological role, exhibits adenosine 5'-monophosphoramidase activity, hydrolyzing purine nucleotide phosphoramidates with a single phosphate group such as adenosine 5'monophosphoramidate (AMP-NH2) to yield AMP and NH2. Hydrolyzes adenosine 5'monophosphomorpholidate (AMP-morpholidate) and guanosine 5'monophosphomorpholidate (GMP-morpholidate). Hydrolyzes lysyl-AMP (AMP-N-epsilon-(N-alpha-acetyl lysine methyl ester)) generated by lysine tRNA ligase. Hydrolyzes Met-AMP, His-AMP, Asp-AMP, lysyl-GMP (GMP-N-epsilon-(N-alpha-acetyl lysine methyl ester)) and AMP-N-alanine methyl ester. Can also convert adenosine 5'-O-phosphorothioate and guanosine 5'-O-phosphorothioate to the corresponding nucleoside 5'-O-phosphates with concomitant release of hydrogen sulfide. In addition, functions as a scaffolding protein that modulates transcriptional activation by the LEF1/TCF1-CTNNB1 complex and by the complex formed with MITF and CTNNB1. Modulates p53/TP53 levels and p53/TP53-mediated apoptosis. Modulates proteasomal degradation of target proteins by the SCF (SKP2-CUL1-F-box protein) E3 ubiquitin-protein ligase complex. Also exhibits SUMO-specific isopeptidase activity, deconjugating SUMO1 from RANGAP1 and RGS17. The sequence is that of Adenosine 5'-monophosphoramidase HINT1 (HINT1) from Oryctolagus cuniculus (Rabbit).